The chain runs to 206 residues: 2,3-bisphosphoglycerate-dependent phosphoglycerate mutase (206 aa).

Substrate is bound by residues 9–16 (RHGQSEWN), 22–23 (TG), Arg-61, 88–91 (ERNY), Lys-99, 115–116 (RR), and 159–160 (GN). Residue His-10 is the Tele-phosphohistidine intermediate of the active site. The active-site Proton donor/acceptor is Glu-88.

It belongs to the phosphoglycerate mutase family. BPG-dependent PGAM subfamily. In terms of assembly, homodimer.

The enzyme catalyses (2R)-2-phosphoglycerate = (2R)-3-phosphoglycerate. The protein operates within carbohydrate degradation; glycolysis; pyruvate from D-glyceraldehyde 3-phosphate: step 3/5. In terms of biological role, catalyzes the interconversion of 2-phosphoglycerate and 3-phosphoglycerate. The protein is 2,3-bisphosphoglycerate-dependent phosphoglycerate mutase of Bartonella tribocorum (strain CIP 105476 / IBS 506).